Here is a 394-residue protein sequence, read N- to C-terminus: MNKKSIRDVDLKGKRVFCRVDFNVPMKEGKITDETRIRAALPTIQYLVEQGAKVILASHLGRPKGQVVEEMRLTPVAARLGELLGKDVKKADEAFGPAVQEMVAAMNEGDVLVLENVRFYAGEEKNDAELAKEFAALADIFVNDAFGAAHRAHASTAGIADYLPAVSGLLMEKELEVLGKALSNPERPFTAIIGGAKVKDKIGVIRHLLDKVDNLIIGGGLAYTFVKALGHEIGLSLCEDDKIELAKEFMQLAKEKGVNFYMPVDVVITEEFSETATTKIVGIDSIPSNWEGVDIGPKTREIYADVIKNSKLVVWNGPMGVFEMTPFAEGTKAVGQALADAEGTYSVIGGGDSAAAVEKFGMADKMSHISTGGGASLEFMEGKELPGVVCLNDK.

Substrate is bound by residues 21-23 (DFN), Arg-36, 59-62 (HLGR), Arg-118, and Arg-151. Ser-183 carries the post-translational modification Phosphoserine. ATP is bound by residues Lys-201 and Gly-292. Phosphothreonine is present on Thr-299. ATP contacts are provided by residues Glu-323 and 350-353 (GGDS).

It belongs to the phosphoglycerate kinase family. Monomer.

It localises to the cytoplasm. It catalyses the reaction (2R)-3-phosphoglycerate + ATP = (2R)-3-phospho-glyceroyl phosphate + ADP. It participates in carbohydrate degradation; glycolysis; pyruvate from D-glyceraldehyde 3-phosphate: step 2/5. This chain is Phosphoglycerate kinase, found in Bacillus cereus (strain ZK / E33L).